The chain runs to 392 residues: MARSDYLFTSESVSEGHPDKVCDRISDTVVDAYLAEMPEARLGVETLATTNRIVIAGEVRGPDSVTFQRLEELTRAAIRDIGYEQDGFHWKHADVAIYLHAQSADIAQGVDASGNKDEGAGDQGIMFGYATDETPALMPAPIYYAHKILKDLADARKARIGDAAKLGPDAKSQVTVRYEGGRPVEATQIVLSTQHLDPSLDSAGVRAIVEPYIRAALPKSWVNDRTVWHVNPTGKFVIGGPDGDCGLTGRKIIVDTYGGAAPHGGGAFSGKDPTKVDRSAAYAARYLAKNVVAAGLSRRATIQLAYAIGVSRPLSIYVDLHGTGEVDEGRLEKVLGEILDLSPRGIRTHLGLNKPIYARTSAYGHFGREPDADGGFSWEKTDLVAKLKSALA.

Residue H17 participates in ATP binding. D19 contributes to the Mg(2+) binding site. E45 is a binding site for K(+). The L-methionine site is built by E58 and Q102. The interval 102–112 (QSADIAQGVDA) is flexible loop. ATP contacts are provided by residues 169–171 (DAK), 235–236 (KF), D244, 250–251 (RK), A267, and K271. Residue D244 coordinates L-methionine. K275 lines the L-methionine pocket.

The protein belongs to the AdoMet synthase family. In terms of assembly, homotetramer; dimer of dimers. Requires Mg(2+) as cofactor. K(+) is required as a cofactor.

It is found in the cytoplasm. It catalyses the reaction L-methionine + ATP + H2O = S-adenosyl-L-methionine + phosphate + diphosphate. It functions in the pathway amino-acid biosynthesis; S-adenosyl-L-methionine biosynthesis; S-adenosyl-L-methionine from L-methionine: step 1/1. In terms of biological role, catalyzes the formation of S-adenosylmethionine (AdoMet) from methionine and ATP. The overall synthetic reaction is composed of two sequential steps, AdoMet formation and the subsequent tripolyphosphate hydrolysis which occurs prior to release of AdoMet from the enzyme. The sequence is that of S-adenosylmethionine synthase from Methylobacterium nodulans (strain LMG 21967 / CNCM I-2342 / ORS 2060).